The sequence spans 231 residues: tRNA (guanine-N(1)-)-methyltransferase (231 aa).

S-adenosyl-L-methionine contacts are provided by residues G112 and 132 to 137; that span reads LGDFVL.

This sequence belongs to the RNA methyltransferase TrmD family. Homodimer.

It is found in the cytoplasm. The catalysed reaction is guanosine(37) in tRNA + S-adenosyl-L-methionine = N(1)-methylguanosine(37) in tRNA + S-adenosyl-L-homocysteine + H(+). Its function is as follows. Specifically methylates guanosine-37 in various tRNAs. The polypeptide is tRNA (guanine-N(1)-)-methyltransferase (Microcystis aeruginosa (strain NIES-843 / IAM M-2473)).